The sequence spans 192 residues: Ion-translocating oxidoreductase complex subunit A (192 aa).

6 helical membrane-spanning segments follow: residues leucine 5–leucine 25, isoleucine 39–valine 59, leucine 65–valine 85, alanine 102–leucine 122, alanine 134–methionine 154, and alanine 171–valine 191.

This sequence belongs to the NqrDE/RnfAE family. As to quaternary structure, the complex is composed of six subunits: RnfA, RnfB, RnfC, RnfD, RnfE and RnfG.

The protein resides in the cell inner membrane. Part of a membrane-bound complex that couples electron transfer with translocation of ions across the membrane. The sequence is that of Ion-translocating oxidoreductase complex subunit A from Shewanella sp. (strain MR-4).